The chain runs to 74 residues: Cytochrome c oxidase subunit 2 (74 aa).

Residues 1 to 14 (MAHPMQLGFQDAAS) lie on the Mitochondrial intermembrane side of the membrane. Residues 15 to 45 (PVMEELLHFHDHALMIVFLISTAVLYIIVVT) traverse the membrane as a helical segment. The Mitochondrial matrix portion of the chain corresponds to 46–74 (VTTKLTDKYVLDAQEIEMVWTIMPAVVLI).

Belongs to the cytochrome c oxidase subunit 2 family. In terms of assembly, component of the cytochrome c oxidase (complex IV, CIV), a multisubunit enzyme composed of 14 subunits. The complex is composed of a catalytic core of 3 subunits MT-CO1, MT-CO2 and MT-CO3, encoded in the mitochondrial DNA, and 11 supernumerary subunits COX4I, COX5A, COX5B, COX6A, COX6B, COX6C, COX7A, COX7B, COX7C, COX8 and NDUFA4, which are encoded in the nuclear genome. The complex exists as a monomer or a dimer and forms supercomplexes (SCs) in the inner mitochondrial membrane with NADH-ubiquinone oxidoreductase (complex I, CI) and ubiquinol-cytochrome c oxidoreductase (cytochrome b-c1 complex, complex III, CIII), resulting in different assemblies (supercomplex SCI(1)III(2)IV(1) and megacomplex MCI(2)III(2)IV(2)). Found in a complex with TMEM177, COA6, COX18, COX20, SCO1 and SCO2. Interacts with TMEM177 in a COX20-dependent manner. Interacts with COX20. Interacts with COX16. Requires Cu cation as cofactor.

It localises to the mitochondrion inner membrane. It catalyses the reaction 4 Fe(II)-[cytochrome c] + O2 + 8 H(+)(in) = 4 Fe(III)-[cytochrome c] + 2 H2O + 4 H(+)(out). Its function is as follows. Component of the cytochrome c oxidase, the last enzyme in the mitochondrial electron transport chain which drives oxidative phosphorylation. The respiratory chain contains 3 multisubunit complexes succinate dehydrogenase (complex II, CII), ubiquinol-cytochrome c oxidoreductase (cytochrome b-c1 complex, complex III, CIII) and cytochrome c oxidase (complex IV, CIV), that cooperate to transfer electrons derived from NADH and succinate to molecular oxygen, creating an electrochemical gradient over the inner membrane that drives transmembrane transport and the ATP synthase. Cytochrome c oxidase is the component of the respiratory chain that catalyzes the reduction of oxygen to water. Electrons originating from reduced cytochrome c in the intermembrane space (IMS) are transferred via the dinuclear copper A center (CU(A)) of subunit 2 and heme A of subunit 1 to the active site in subunit 1, a binuclear center (BNC) formed by heme A3 and copper B (CU(B)). The BNC reduces molecular oxygen to 2 water molecules using 4 electrons from cytochrome c in the IMS and 4 protons from the mitochondrial matrix. This Amia calva (Bowfin) protein is Cytochrome c oxidase subunit 2 (mt-co2).